The chain runs to 160 residues: MSDRIYLTKQGYNRMRDELNLLKTVVRKEVLEKIAEARAHGDLSENAEYEAAREQQAQMESKIVDLENKLTRASILDPKQIRTDRVYILTSVKLRNLDETDDEIIEYTLVSSEEADTDQGKISVRSPVGKALIGKAVGEKVQIHVPKGELHYEILEIFVK.

Positions 43–75 (LSENAEYEAAREQQAQMESKIVDLENKLTRASI) form a coiled coil.

The protein belongs to the GreA/GreB family.

Functionally, necessary for efficient RNA polymerase transcription elongation past template-encoded arresting sites. The arresting sites in DNA have the property of trapping a certain fraction of elongating RNA polymerases that pass through, resulting in locked ternary complexes. Cleavage of the nascent transcript by cleavage factors such as GreA or GreB allows the resumption of elongation from the new 3'terminus. GreA releases sequences of 2 to 3 nucleotides. The polypeptide is Transcription elongation factor GreA (Prosthecochloris aestuarii (strain DSM 271 / SK 413)).